The following is a 510-amino-acid chain: Inner membrane protein YeeR (510 aa).

Residue Met-1 is a topological domain, cytoplasmic. A helical transmembrane segment spans residues 2–22; the sequence is LQIVGALILLIAGFAILRLLF. Residues 23 to 30 are Periplasmic-facing; that stretch reads RALISTAS. Residues 31–51 form a helical membrane-spanning segment; it reads ALAGLILLCLFGPALLAGYIT. The Cytoplasmic portion of the chain corresponds to 52–61; the sequence is ERITRLFHIR. The helical transmembrane segment at 62–82 threads the bilayer; it reads WLAGVFLTIAGMIISFMWGLD. Residues 83–94 are Periplasmic-facing; that stretch reads GKHIALEAHTFD. Residues 95-115 traverse the membrane as a helical segment; sequence SVKFILTTALAGGLLAVPLQI. Residues 116–136 are Cytoplasmic-facing; the sequence is KNIQQNGITPEDISKEINGYY. Residues 137–157 form a helical membrane-spanning segment; sequence CCFYTAFFLMACSACAPLIAL. Topologically, residues 158 to 164 are periplasmic; the sequence is QYDISPS. Residues 165–185 traverse the membrane as a helical segment; sequence LMWWGGLLYWLAALVTLLWAA. Over 186-510 the chain is Cytoplasmic; that stretch reads SQIQALKKLT…KIREGKVEER (325 aa).

It localises to the cell inner membrane. The protein is Inner membrane protein YeeR (yeeR) of Escherichia coli (strain K12).